The sequence spans 357 residues: 3-isopropylmalate dehydrogenase (357 aa).

Substrate is bound by residues Arg-97, Arg-107, Arg-135, and Asp-224. Asp-224, Asp-248, and Asp-252 together coordinate Mg(2+). 282–294 (GSAPDIAGKNIAN) serves as a coordination point for NAD(+).

The protein belongs to the isocitrate and isopropylmalate dehydrogenases family. LeuB type 1 subfamily. In terms of assembly, homodimer. It depends on Mg(2+) as a cofactor. The cofactor is Mn(2+).

It localises to the cytoplasm. It carries out the reaction (2R,3S)-3-isopropylmalate + NAD(+) = 4-methyl-2-oxopentanoate + CO2 + NADH. The protein operates within amino-acid biosynthesis; L-leucine biosynthesis; L-leucine from 3-methyl-2-oxobutanoate: step 3/4. In terms of biological role, catalyzes the oxidation of 3-carboxy-2-hydroxy-4-methylpentanoate (3-isopropylmalate) to 3-carboxy-4-methyl-2-oxopentanoate. The product decarboxylates to 4-methyl-2 oxopentanoate. This chain is 3-isopropylmalate dehydrogenase, found in Prochlorococcus marinus subsp. pastoris (strain CCMP1986 / NIES-2087 / MED4).